The following is a 948-amino-acid chain: Phosphoenolpyruvate carboxylase (948 aa).

Residues His138 and Lys610 contribute to the active site.

This sequence belongs to the PEPCase type 1 family. Mg(2+) serves as cofactor.

The catalysed reaction is oxaloacetate + phosphate = phosphoenolpyruvate + hydrogencarbonate. In terms of biological role, forms oxaloacetate, a four-carbon dicarboxylic acid source for the tricarboxylic acid cycle. In Streptococcus gordonii (strain Challis / ATCC 35105 / BCRC 15272 / CH1 / DL1 / V288), this protein is Phosphoenolpyruvate carboxylase.